We begin with the raw amino-acid sequence, 551 residues long: Mesoderm induction early response protein 3 (551 aa).

Low complexity predominate over residues 1–16 (MAEASFGSSSPVGSLS). Disordered regions lie at residues 1-62 (MAEA…EKEG) and 113-169 (LSGD…GNSP). A compositionally biased stretch (basic and acidic residues) spans 17–36 (SEDHDFDPTAEMLVHDYDDE). Ser52, Ser53, and Ser114 each carry phosphoserine. The segment covering 121 to 134 (QSSADDLTPSVTSH) has biased composition (polar residues). Residues 154–163 (KESEIEDVET) are compositionally biased toward acidic residues. Ser156 is modified (phosphoserine). Thr163 carries the phosphothreonine modification. Residues Ser165 and Ser168 each carry the phosphoserine modification. The ELM2 domain maps to 174 to 273 (REIMIGLEYQ…EAIERYCCNG (100 aa)). In terms of domain architecture, SANT spans 278 to 330 (EGMTAWTEEECRSFEHALMLHGKDFHLIQKDKVRSRTVAECVAFYYMWKKSER).

The protein resides in the nucleus. Functionally, transcriptional repressor. The chain is Mesoderm induction early response protein 3 (Mier3) from Mus musculus (Mouse).